A 263-amino-acid polypeptide reads, in one-letter code: Tryptophan synthase alpha chain (263 aa).

Active-site proton acceptor residues include glutamate 49 and aspartate 60.

Belongs to the TrpA family. As to quaternary structure, tetramer of two alpha and two beta chains.

The catalysed reaction is (1S,2R)-1-C-(indol-3-yl)glycerol 3-phosphate + L-serine = D-glyceraldehyde 3-phosphate + L-tryptophan + H2O. It functions in the pathway amino-acid biosynthesis; L-tryptophan biosynthesis; L-tryptophan from chorismate: step 5/5. Functionally, the alpha subunit is responsible for the aldol cleavage of indoleglycerol phosphate to indole and glyceraldehyde 3-phosphate. The chain is Tryptophan synthase alpha chain from Cereibacter sphaeroides (strain KD131 / KCTC 12085) (Rhodobacter sphaeroides).